Here is a 250-residue protein sequence, read N- to C-terminus: 4-hydroxy-tetrahydrodipicolinate reductase (250 aa).

Residues 10-15 (GAKGRI), 78-80 (GTT), and 105-108 (APNF) each bind NAD(+). His135 serves as the catalytic Proton donor/acceptor. (S)-2,3,4,5-tetrahydrodipicolinate is bound at residue His136. Residue Lys139 is the Proton donor of the active site. 145-146 (GT) serves as a coordination point for (S)-2,3,4,5-tetrahydrodipicolinate.

Belongs to the DapB family.

The protein localises to the cytoplasm. The catalysed reaction is (S)-2,3,4,5-tetrahydrodipicolinate + NAD(+) + H2O = (2S,4S)-4-hydroxy-2,3,4,5-tetrahydrodipicolinate + NADH + H(+). It carries out the reaction (S)-2,3,4,5-tetrahydrodipicolinate + NADP(+) + H2O = (2S,4S)-4-hydroxy-2,3,4,5-tetrahydrodipicolinate + NADPH + H(+). Its pathway is amino-acid biosynthesis; L-lysine biosynthesis via DAP pathway; (S)-tetrahydrodipicolinate from L-aspartate: step 4/4. In terms of biological role, catalyzes the conversion of 4-hydroxy-tetrahydrodipicolinate (HTPA) to tetrahydrodipicolinate. This Streptomyces coelicolor (strain ATCC BAA-471 / A3(2) / M145) protein is 4-hydroxy-tetrahydrodipicolinate reductase.